A 492-amino-acid polypeptide reads, in one-letter code: Probable endopolygalacturonase D (492 aa).

Positions 1–16 (MKRSALILSFLPLVFG) are cleaved as a signal peptide. Cysteine 151 and cysteine 166 are disulfide-bonded. PbH1 repeat units lie at residues 216–238 (GTSV…AYWD), 258–280 (MYNS…EIES), 281–319 (TEHL…DIKE), and 320–341 (SSYF…AVTS). N-linked (GlcNAc...) asparagine glycosylation occurs at asparagine 292. The active-site Proton donor is aspartate 334. The cysteines at positions 336 and 352 are disulfide-linked. Histidine 356 is an active-site residue. PbH1 repeat units lie at residues 371-392 (VNGV…RIKT), 400-422 (VYNI…DVQQ), and 434-478 (TNGV…SITG). N-linked (GlcNAc...) asparagine glycans are attached at residues asparagine 407 and asparagine 441. Disulfide bonds link cysteine 461–cysteine 466 and cysteine 484–cysteine 491.

Belongs to the glycosyl hydrolase 28 family.

The protein localises to the secreted. It catalyses the reaction (1,4-alpha-D-galacturonosyl)n+m + H2O = (1,4-alpha-D-galacturonosyl)n + (1,4-alpha-D-galacturonosyl)m.. Functionally, involved in maceration and soft-rotting of plant tissue. Hydrolyzes the 1,4-alpha glycosidic bonds of de-esterified pectate in the smooth region of the plant cell wall. The sequence is that of Probable endopolygalacturonase D (pgaD) from Aspergillus oryzae (strain ATCC 42149 / RIB 40) (Yellow koji mold).